Consider the following 382-residue polypeptide: Intermediate transcription factor 3 large subunit (382 aa).

This sequence belongs to the poxviruses A23 family. In terms of assembly, heterodimer of a 45 kDa and a 32 kDa subunit.

Acts with RNA polymerase to initiate transcription from intermediate gene promoters. The sequence is that of Intermediate transcription factor 3 large subunit (VITF3L) from Oryctolagus cuniculus (Rabbit).